A 195-amino-acid polypeptide reads, in one-letter code: MPAETAPRVILASGSPRRRELLGNLGVPFEVVVSGEAEDSQETDPARLALELGQLKARAVAAQHPDAVVIAADTVVALGGTLLAKPADEAENAAFLRQQSGKTQQVYTGVCVISPAGEQSGVERTDVTFRALTEAEVTFYARSGEGLDKAGGYGIQGVGMALIERVEGDYSNIVGFPLALVLRLLRGAGVSAFGV.

Asp73 (proton acceptor) is an active-site residue.

It belongs to the Maf family. YhdE subfamily. It depends on a divalent metal cation as a cofactor.

It is found in the cytoplasm. It catalyses the reaction dTTP + H2O = dTMP + diphosphate + H(+). It carries out the reaction UTP + H2O = UMP + diphosphate + H(+). Nucleoside triphosphate pyrophosphatase that hydrolyzes dTTP and UTP. May have a dual role in cell division arrest and in preventing the incorporation of modified nucleotides into cellular nucleic acids. This is dTTP/UTP pyrophosphatase from Deinococcus radiodurans (strain ATCC 13939 / DSM 20539 / JCM 16871 / CCUG 27074 / LMG 4051 / NBRC 15346 / NCIMB 9279 / VKM B-1422 / R1).